Consider the following 224-residue polypeptide: Holliday junction branch migration complex subunit RuvA (224 aa).

The segment at 1–64 is domain I; it reads MIGKVAGILD…EDLLQLFGFP (64 aa). The segment at 65–143 is domain II; that stretch reads TMIEKEWHRL…ALMAMGGGTA (79 aa). The disordered stretch occupies residues 141–185; that stretch reads GTAALAPSEPPEPEPGTSSGSRRKTRAPEPPRPSHTADALSALAN. Residues 144–170 form a flexible linker region; that stretch reads ALAPSEPPEPEPGTSSGSRRKTRAPEP. The tract at residues 171–224 is domain III; it reads PRPSHTADALSALANLGYQPTDAAQAVAQAAGESPDADTAALIRAALKLLAPKS.

This sequence belongs to the RuvA family. Homotetramer. Forms an RuvA(8)-RuvB(12)-Holliday junction (HJ) complex. HJ DNA is sandwiched between 2 RuvA tetramers; dsDNA enters through RuvA and exits via RuvB. An RuvB hexamer assembles on each DNA strand where it exits the tetramer. Each RuvB hexamer is contacted by two RuvA subunits (via domain III) on 2 adjacent RuvB subunits; this complex drives branch migration. In the full resolvosome a probable DNA-RuvA(4)-RuvB(12)-RuvC(2) complex forms which resolves the HJ.

Its subcellular location is the cytoplasm. In terms of biological role, the RuvA-RuvB-RuvC complex processes Holliday junction (HJ) DNA during genetic recombination and DNA repair, while the RuvA-RuvB complex plays an important role in the rescue of blocked DNA replication forks via replication fork reversal (RFR). RuvA specifically binds to HJ cruciform DNA, conferring on it an open structure. The RuvB hexamer acts as an ATP-dependent pump, pulling dsDNA into and through the RuvAB complex. HJ branch migration allows RuvC to scan DNA until it finds its consensus sequence, where it cleaves and resolves the cruciform DNA. The polypeptide is Holliday junction branch migration complex subunit RuvA (Cereibacter sphaeroides (strain ATCC 17029 / ATH 2.4.9) (Rhodobacter sphaeroides)).